The chain runs to 292 residues: tRNA pseudouridine synthase B (292 aa).

The active-site Nucleophile is the Asp38.

The protein belongs to the pseudouridine synthase TruB family. Type 1 subfamily.

The catalysed reaction is uridine(55) in tRNA = pseudouridine(55) in tRNA. In terms of biological role, responsible for synthesis of pseudouridine from uracil-55 in the psi GC loop of transfer RNAs. The protein is tRNA pseudouridine synthase B of Streptococcus pneumoniae serotype 4 (strain ATCC BAA-334 / TIGR4).